The sequence spans 431 residues: Serine hydroxymethyltransferase (431 aa).

Residues Leu127 and 131-133 (GHL) each bind (6S)-5,6,7,8-tetrahydrofolate. Lys236 is modified (N6-(pyridoxal phosphate)lysine).

The protein belongs to the SHMT family. In terms of assembly, homodimer. The cofactor is pyridoxal 5'-phosphate.

Its subcellular location is the cytoplasm. It carries out the reaction (6R)-5,10-methylene-5,6,7,8-tetrahydrofolate + glycine + H2O = (6S)-5,6,7,8-tetrahydrofolate + L-serine. The protein operates within one-carbon metabolism; tetrahydrofolate interconversion. It participates in amino-acid biosynthesis; glycine biosynthesis; glycine from L-serine: step 1/1. Catalyzes the reversible interconversion of serine and glycine with tetrahydrofolate (THF) serving as the one-carbon carrier. This reaction serves as the major source of one-carbon groups required for the biosynthesis of purines, thymidylate, methionine, and other important biomolecules. Also exhibits THF-independent aldolase activity toward beta-hydroxyamino acids, producing glycine and aldehydes, via a retro-aldol mechanism. This is Serine hydroxymethyltransferase from Granulibacter bethesdensis (strain ATCC BAA-1260 / CGDNIH1).